Here is a 368-residue protein sequence, read N- to C-terminus: MDNLKKTPLFDLYKKYNGKIIDFAGWALPVQFESIISEHEAVRNAAGLFDVSHMGEITVKGREAFNFLQNLITNDLSKLKDNQVFYTFMCNYNGGVVDDLLVYKYSDEHFLLVVNAANIEKDYKWMKDNKGVYEVEINNISDEISELAVQGPKAEEILQKLTYTDLSEIKFFYFKDNVKIAGIECLVSRTGYTGEDGFEIYMPNKYAVELWEKIIEVGKEYGLKPAGLGARDTLRFEAGLPLYGNELSEEITPLEAGFEFFVKFDKGNFIGKDALLKQKEEGLKRKIVGFEMIDNGIPRHGYEVRADNQKIGYVTTGYFSPTLKKNIGLALIDSKYAQLGNQIEIVIRNKPLKALIISKNFYKKNYKK.

This sequence belongs to the GcvT family. As to quaternary structure, the glycine cleavage system is composed of four proteins: P, T, L and H.

The enzyme catalyses N(6)-[(R)-S(8)-aminomethyldihydrolipoyl]-L-lysyl-[protein] + (6S)-5,6,7,8-tetrahydrofolate = N(6)-[(R)-dihydrolipoyl]-L-lysyl-[protein] + (6R)-5,10-methylene-5,6,7,8-tetrahydrofolate + NH4(+). The glycine cleavage system catalyzes the degradation of glycine. The sequence is that of Aminomethyltransferase from Thermoanaerobacter pseudethanolicus (strain ATCC 33223 / 39E) (Clostridium thermohydrosulfuricum).